A 157-amino-acid polypeptide reads, in one-letter code: Transcriptional repressor NrdR (157 aa).

The segment at 3-34 (CPFCGHEDTQVKDSRPTDDGTAIRRRRSCTAC) is a zinc-finger region. The region spanning 49 to 139 (LIVVKTDQRR…VYRNFSDAGD (91 aa)) is the ATP-cone domain.

It belongs to the NrdR family. Zn(2+) serves as cofactor.

Its function is as follows. Negatively regulates transcription of bacterial ribonucleotide reductase nrd genes and operons by binding to NrdR-boxes. The polypeptide is Transcriptional repressor NrdR (Granulibacter bethesdensis (strain ATCC BAA-1260 / CGDNIH1)).